Consider the following 609-residue polypeptide: MADSERSEAFGTPDDTPLSSNDAAELEQLRREAAVLREQLESAVGPQGTARSARDVHQLEARIDSLAARNSKLMETLKEARQQLLALREEVDRLGQPPSGYGVLLSAHDDDTVDVFTSGRKMRLTCSPNIEISLLRKGQTVRLNEALTVVEAGTFESVGEISTLREVLADGHRALVVGHADEERIVWLAEPLVAEDLPDGFPDALNDDTKPRKLRPGDSLLVDTKAGYAFERIPKAEVEDLVLEEVPDVSYEDIGGLTRQIEQIRDAVELPFLHKELYREYALRPPKGVLLYGPPGCGKTLIAKAVANSLAKKMAEVRGDDSREAKSYFLNIKGPELLNKFVGETERHIRLIFQRAREKASEGTPVIVFFDEMDSIFRTRGTGVSSDVETTVVPQLLSEIDGVEGLENVIVIGASNREDMIDPAILRPGRLDVKIKIERPDAEAAQDIYSKYLTETLPVHADDLAEFEGERPACIKAMIEKVVDRMYAEIDDNRFLEVTYANGDKEVMYFKDFNSGAMIQNVVDRAKKNAIKSVLETGQPGLRIQHLLDSIVDEFAENEDLPNTTNPDDWARISGKKGERIVYIRTLVTGKSSSASRAIDTESNLGQYL.

Residues 1–24 (MADSERSEAFGTPDDTPLSSNDAA) form a disordered region. Residues 19–96 (SSNDAAELEQ…LREEVDRLGQ (78 aa)) are a coiled coil. 296-301 (GCGKTL) provides a ligand contact to ATP. The interval 608 to 609 (YL) is docks into pockets in the proteasome alpha-ring.

It belongs to the AAA ATPase family. In terms of assembly, homohexamer. Assembles into a hexameric ring structure that caps the 20S proteasome core. Strongly interacts with the prokaryotic ubiquitin-like protein Pup through a hydrophobic interface; the interacting region of ARC lies in its N-terminal coiled-coil domain. There is one Pup binding site per ARC hexamer ring. Upon ATP-binding, the C-terminus of ARC interacts with the alpha-rings of the proteasome core, possibly by binding to the intersubunit pockets.

Its pathway is protein degradation; proteasomal Pup-dependent pathway. Functionally, ATPase which is responsible for recognizing, binding, unfolding and translocation of pupylated proteins into the bacterial 20S proteasome core particle. May be essential for opening the gate of the 20S proteasome via an interaction with its C-terminus, thereby allowing substrate entry and access to the site of proteolysis. Thus, the C-termini of the proteasomal ATPase may function like a 'key in a lock' to induce gate opening and therefore regulate proteolysis. In Mycobacterium ulcerans (strain Agy99), this protein is Proteasome-associated ATPase.